A 373-amino-acid chain; its full sequence is Ubiquitin carboxyl-terminal hydrolase 50 (373 aa).

The USP domain occupies threonine 44–glutamine 364. Cysteine 53 functions as the Nucleophile in the catalytic mechanism. Histidine 322 functions as the Proton acceptor in the catalytic mechanism.

The protein belongs to the peptidase C19 family.

The protein resides in the cytoplasm. Its subcellular location is the cytoskeleton. It localises to the microtubule organizing center. The protein localises to the centrosome. It is found in the nucleus. The catalysed reaction is Thiol-dependent hydrolysis of ester, thioester, amide, peptide and isopeptide bonds formed by the C-terminal Gly of ubiquitin (a 76-residue protein attached to proteins as an intracellular targeting signal).. Functionally, deubiquitinating enzyme that removes conjugated ubiquitin from specific proteins to regulate different cellular processes. Regulates the inflammasome signaling pathway by deubiquitinating 'Lys-63'-linked polyubiquitination of the PYCARD/ASC adapter protein. Regulates the ubiquitination and stability of the ACE2 protein. Acts as a negative regulator of the G2/M checkpoint pathway, by preventing serine/threonine kinase WEE1 degradation, thereby repressing entry into mitosis following activation of the G2/M DNA damage checkpoint. In Macaca fascicularis (Crab-eating macaque), this protein is Ubiquitin carboxyl-terminal hydrolase 50 (USP50).